A 131-amino-acid polypeptide reads, in one-letter code: Heterochromatin silencing protein rss1 (131 aa).

Monomer.

It is found in the cytoplasm. Its subcellular location is the nucleus. In terms of biological role, required for heterochromatin silencing within pericentromeric repeats and at telomers. Facilitates the recruitment of Clr6 histone deacetylase (HDAC) by interacting with histones. Also interacts with Rad25, which mediates heterochromatin silencing in DNA repeats by recruiting the RITS complex. Together with Rad25, forms a regulatory hub that defines heterochromatin silencing within tandem repeats via linking RNAi and HDAC. The sequence is that of Heterochromatin silencing protein rss1 (rss1) from Schizosaccharomyces pombe (strain 972 / ATCC 24843) (Fission yeast).